The following is a 130-amino-acid chain: Fluoride-specific ion channel FluC (130 aa).

4 helical membrane-spanning segments follow: residues 3-23 (FIFL…YFVG), 39-59 (GTFS…HLAV), 67-87 (FGIF…SYGL), and 102-122 (VSYA…GWFL). Positions 77 and 80 each coordinate Na(+).

Belongs to the fluoride channel Fluc/FEX (TC 1.A.43) family.

The protein resides in the cell inner membrane. It carries out the reaction fluoride(in) = fluoride(out). With respect to regulation, na(+) is not transported, but it plays an essential structural role and its presence is essential for fluoride channel function. Functionally, fluoride-specific ion channel. Important for reducing fluoride concentration in the cell, thus reducing its toxicity. The protein is Fluoride-specific ion channel FluC of Helicobacter pylori (strain Shi470).